Here is a 64-residue protein sequence, read N- to C-terminus: DNA-binding protein 7 (64 aa).

N6-methyllysine occurs at positions 5 and 7.

This sequence belongs to the 7 kDa DNA-binding/endoribonuclease P2 family. Monomer.

Its subcellular location is the cytoplasm. In terms of biological role, can constrain negative DNA supercoils. May be involved in maintaining the integrity of the genome at high temperature. This chain is DNA-binding protein 7, found in Sulfurisphaera tokodaii (strain DSM 16993 / JCM 10545 / NBRC 100140 / 7) (Sulfolobus tokodaii).